We begin with the raw amino-acid sequence, 241 residues long: Tetrahydromethanopterin S-methyltransferase subunit A (241 aa).

Residues 1–220 are Cytoplasmic-facing; that stretch reads MAEKKEPAEG…HSGVLAGKIE (220 aa). 5-hydroxybenzimidazolylcob(I)amide is bound at residue His85. A helical membrane pass occupies residues 221–241; sequence GIMVGLVLSLFVLGLLLFGGM.

This sequence belongs to the MtrA family. As to quaternary structure, the complex is composed of 8 subunits; MtrA, MtrB, MtrC, MtrD, MtrE, MtrF, MtrG and MtrH. It depends on 5-hydroxybenzimidazolylcob(I)amide as a cofactor.

It is found in the cell membrane. The catalysed reaction is 5-methyl-5,6,7,8-tetrahydromethanopterin + coenzyme M + 2 Na(+)(in) = 5,6,7,8-tetrahydromethanopterin + methyl-coenzyme M + 2 Na(+)(out). The protein operates within one-carbon metabolism; methanogenesis from CO(2); methyl-coenzyme M from 5,10-methylene-5,6,7,8-tetrahydromethanopterin: step 2/2. Part of a complex that catalyzes the formation of methyl-coenzyme M and tetrahydromethanopterin from coenzyme M and methyl-tetrahydromethanopterin. This is an energy-conserving, sodium-ion translocating step. This Methanohalobium evestigatum (strain ATCC BAA-1072 / DSM 3721 / NBRC 107634 / OCM 161 / Z-7303) protein is Tetrahydromethanopterin S-methyltransferase subunit A.